A 176-amino-acid polypeptide reads, in one-letter code: Small capsomere-interacting protein (176 aa).

2 disordered regions span residues 75–109 (DKRQRASVAGAGAHAHLGGSSATPVQQAQAAASAG) and 148–176 (ASAAAAVDTGSGGGGQPHDTAPRGARKKQ). Over residues 80 to 109 (ASVAGAGAHAHLGGSSATPVQQAQAAASAG) the composition is skewed to low complexity.

It belongs to the herpesviridae small capsomere-interacting protein family. As to quaternary structure, interacts with the major capsid protein/MCP.

It localises to the virion. The protein resides in the host nucleus. In terms of biological role, participates in the assembly of the infectious particles by decorating the outer surface of the capsid shell and thus forming a layer between the capsid and the tegument. Complexes composed of the major capsid protein and small capsomere-interacting protein/SCP assemble together in the host cytoplasm and are translocated to the nucleus, where they accumulate and participate in capsid assembly. The sequence is that of Small capsomere-interacting protein from Epstein-Barr virus (strain B95-8) (HHV-4).